Consider the following 428-residue polypeptide: Trigger factor (428 aa).

The 85-residue stretch at 166 to 250 (GDIVTFDFKG…IKNIKEKILP (85 aa)) folds into the PPIase FKBP-type domain.

This sequence belongs to the FKBP-type PPIase family. Tig subfamily.

It localises to the cytoplasm. The catalysed reaction is [protein]-peptidylproline (omega=180) = [protein]-peptidylproline (omega=0). Involved in protein export. Acts as a chaperone by maintaining the newly synthesized protein in an open conformation. Functions as a peptidyl-prolyl cis-trans isomerase. This Mycoplasma capricolum subsp. capricolum (strain California kid / ATCC 27343 / NCTC 10154) protein is Trigger factor.